A 200-amino-acid polypeptide reads, in one-letter code: ATP synthase subunit b 1 (200 aa).

A helical transmembrane segment spans residues 14-34; sequence AAVIVVVSLMAFCCAGFAVAA.

The protein belongs to the ATPase B chain family. In terms of assembly, F-type ATPases have 2 components, F(1) - the catalytic core - and F(0) - the membrane proton channel. F(1) has five subunits: alpha(3), beta(3), gamma(1), delta(1), epsilon(1). F(0) has three main subunits: a(1), b(2) and c(10-14). The alpha and beta chains form an alternating ring which encloses part of the gamma chain. F(1) is attached to F(0) by a central stalk formed by the gamma and epsilon chains, while a peripheral stalk is formed by the delta and b chains.

It localises to the cell inner membrane. In terms of biological role, f(1)F(0) ATP synthase produces ATP from ADP in the presence of a proton or sodium gradient. F-type ATPases consist of two structural domains, F(1) containing the extramembraneous catalytic core and F(0) containing the membrane proton channel, linked together by a central stalk and a peripheral stalk. During catalysis, ATP synthesis in the catalytic domain of F(1) is coupled via a rotary mechanism of the central stalk subunits to proton translocation. Component of the F(0) channel, it forms part of the peripheral stalk, linking F(1) to F(0). This Desulfosudis oleivorans (strain DSM 6200 / JCM 39069 / Hxd3) (Desulfococcus oleovorans) protein is ATP synthase subunit b 1.